Consider the following 191-residue polypeptide: Dephospho-CoA kinase (191 aa).

In terms of domain architecture, DPCK spans 3 to 191 (AIGITGSYAS…KLIKDLECRV (189 aa)). Position 11 to 16 (11 to 16 (ASGKTF)) interacts with ATP.

It belongs to the CoaE family.

Its subcellular location is the cytoplasm. It carries out the reaction 3'-dephospho-CoA + ATP = ADP + CoA + H(+). Its pathway is cofactor biosynthesis; coenzyme A biosynthesis; CoA from (R)-pantothenate: step 5/5. Its function is as follows. Catalyzes the phosphorylation of the 3'-hydroxyl group of dephosphocoenzyme A to form coenzyme A. The chain is Dephospho-CoA kinase from Rickettsia prowazekii (strain Madrid E).